The sequence spans 487 residues: Glutamate--tRNA ligase (487 aa).

The 'HIGH' region motif lies at 10–20 (PSPTGYMHVGN). The 'KMSKS' region signature appears at 251-255 (KLSKR). ATP is bound at residue K254.

This sequence belongs to the class-I aminoacyl-tRNA synthetase family. Glutamate--tRNA ligase type 1 subfamily. Monomer.

The protein localises to the cytoplasm. It catalyses the reaction tRNA(Glu) + L-glutamate + ATP = L-glutamyl-tRNA(Glu) + AMP + diphosphate. In terms of biological role, catalyzes the attachment of glutamate to tRNA(Glu) in a two-step reaction: glutamate is first activated by ATP to form Glu-AMP and then transferred to the acceptor end of tRNA(Glu). The protein is Glutamate--tRNA ligase of Clostridium kluyveri (strain ATCC 8527 / DSM 555 / NBRC 12016 / NCIMB 10680 / K1).